The following is a 98-amino-acid chain: PE family immunomodulator PE35 (98 aa).

In terms of domain architecture, PE spans 1-90 (MEKMSHDPIA…DVARTYSQID (90 aa)).

Belongs to the mycobacterial PE family. Interacts with PPE68. PE35/PPE68 complex interacts with human TLR2.

The protein resides in the secreted. It localises to the cell surface. Plays a major role in RD1-associated pathogenesis, and may contribute to the establishment and maintenance of M.tuberculosis infection. Together with PPE68, stimulates the secretion of IL-10 and MCP-1 from human macrophages, via the interaction with human Toll-like receptor 2 (TLR2). In Mycobacterium tuberculosis (strain CDC 1551 / Oshkosh), this protein is PE family immunomodulator PE35 (PE35).